The chain runs to 436 residues: Phosphoribosylamine--glycine ligase (436 aa).

An ATP-grasp domain is found at 106 to 318; sequence RKLFEDYDIE…LADVCQAIVD (213 aa). ATP is bound at residue 133 to 196; that stretch reads LDDFDRDVVV…EERLIGEEFT (64 aa). Residues glutamine 276, glutamate 288, and asparagine 290 each coordinate Mg(2+). Glutamine 276, glutamate 288, and asparagine 290 together coordinate Mn(2+).

The protein belongs to the GARS family. Mg(2+) serves as cofactor. Mn(2+) is required as a cofactor.

The catalysed reaction is 5-phospho-beta-D-ribosylamine + glycine + ATP = N(1)-(5-phospho-beta-D-ribosyl)glycinamide + ADP + phosphate + H(+). It participates in purine metabolism; IMP biosynthesis via de novo pathway; N(1)-(5-phospho-D-ribosyl)glycinamide from 5-phospho-alpha-D-ribose 1-diphosphate: step 2/2. The polypeptide is Phosphoribosylamine--glycine ligase (Methanobrevibacter smithii (strain ATCC 35061 / DSM 861 / OCM 144 / PS)).